A 274-amino-acid chain; its full sequence is Large ribosomal subunit protein uL2 (274 aa).

Residues 221–256 (RGTAMNPVDHPHGGGEGRNFGKHPVTPWGVPTKGYK) form a disordered region.

The protein belongs to the universal ribosomal protein uL2 family. In terms of assembly, part of the 50S ribosomal subunit. Forms a bridge to the 30S subunit in the 70S ribosome.

One of the primary rRNA binding proteins. Required for association of the 30S and 50S subunits to form the 70S ribosome, for tRNA binding and peptide bond formation. It has been suggested to have peptidyltransferase activity; this is somewhat controversial. Makes several contacts with the 16S rRNA in the 70S ribosome. The protein is Large ribosomal subunit protein uL2 of Hahella chejuensis (strain KCTC 2396).